A 481-amino-acid polypeptide reads, in one-letter code: Squalene epoxidase erg1 (481 aa).

A helical membrane pass occupies residues 28 to 48 (HADVVIIGAGVLGCALAVALG). FAD-binding positions include 38 to 39 (VL), 58 to 59 (EA), arginine 66, and arginine 138. An N-linked (GlcNAc...) asparagine glycan is attached at asparagine 146. The FAD site is built by aspartate 319 and methionine 332. Transmembrane regions (helical) follow at residues 425–445 (KPSVLFVHFFSVALLSLWVLL) and 452–472 (LFPVALFKCIMTFWTACVVIF).

This sequence belongs to the squalene monooxygenase family. It depends on FAD as a cofactor.

It is found in the endoplasmic reticulum membrane. The protein resides in the microsome membrane. It catalyses the reaction squalene + reduced [NADPH--hemoprotein reductase] + O2 = (S)-2,3-epoxysqualene + oxidized [NADPH--hemoprotein reductase] + H2O + H(+). It functions in the pathway steroid metabolism; ergosterol biosynthesis. Its function is as follows. Squalene epoxidase; part of the third module of ergosterol biosynthesis pathway that includes the late steps of the pathway. Erg1 catalyzes the epoxidation of squalene into 2,3-epoxysqualene. The third module or late pathway involves the ergosterol synthesis itself through consecutive reactions that mainly occur in the endoplasmic reticulum (ER) membrane. Firstly, the squalene synthase erg9 catalyzes the condensation of 2 farnesyl pyrophosphate moieties to form squalene, which is the precursor of all steroids. Squalene synthase is crucial for balancing the incorporation of farnesyl diphosphate (FPP) into sterol and nonsterol isoprene synthesis. Secondly, squalene is converted into lanosterol by the consecutive action of the squalene epoxidase erg1 and the lanosterol synthase erg7. Then, the delta(24)-sterol C-methyltransferase erg6 methylates lanosterol at C-24 to produce eburicol. Eburicol is the substrate of the sterol 14-alpha demethylase encoded by cyp51A and cyp51B, to yield 4,4,24-trimethyl ergosta-8,14,24(28)-trienol. The C-14 reductase erg24 then reduces the C14=C15 double bond which leads to 4,4-dimethylfecosterol. A sequence of further demethylations at C-4, involving the C-4 demethylation complex containing the C-4 methylsterol oxidases erg25A or erg25B, the sterol-4-alpha-carboxylate 3-dehydrogenase erg26 and the 3-keto-steroid reductase erg27, leads to the production of fecosterol via 4-methylfecosterol. The C-8 sterol isomerase erg2 then catalyzes the reaction which results in unsaturation at C-7 in the B ring of sterols and thus converts fecosterol to episterol. The sterol-C5-desaturase erg3B then catalyzes the introduction of a C-5 double bond in the B ring to produce 5-dehydroepisterol. The 2 other sterol-C5-desaturases, erg3A and erg3C, seem to be less important in ergosterol biosynthesis. The C-22 sterol desaturase erg5 further converts 5-dehydroepisterol into ergosta-5,7,22,24(28)-tetraen-3beta-ol by forming the C-22(23) double bond in the sterol side chain. Finally, ergosta-5,7,22,24(28)-tetraen-3beta-ol is substrate of the C-24(28) sterol reductases erg4A and erg4B to produce ergosterol. Possible alternative sterol biosynthetic pathways might exist from fecosterol to ergosterol, depending on the activities of the erg3 isoforms. The chain is Squalene epoxidase erg1 from Aspergillus fumigatus (strain ATCC MYA-4609 / CBS 101355 / FGSC A1100 / Af293) (Neosartorya fumigata).